Consider the following 855-residue polypeptide: tRNA(Met) cytidine acetyltransferase TmcA (855 aa).

ATP contacts are provided by residues Gln-260, 286–295, and Arg-438; that span reads GRGKSALLGI. The 184-residue stretch at 480–663 folds into the N-acetyltransferase domain; it reads PDLRYWFEDP…GEYSVAVIRP (184 aa). Acetyl-CoA-binding positions include 590 to 592, 597 to 603, Glu-630, and Arg-637; these read IAT and MRHGLGS.

This sequence belongs to the RNA cytidine acetyltransferase family. TmcA subfamily.

The protein localises to the cytoplasm. The catalysed reaction is cytidine(34) in elongator tRNA(Met) + acetyl-CoA + ATP + H2O = N(4)-acetylcytidine(34) in elongator tRNA(Met) + ADP + phosphate + CoA + H(+). Functionally, catalyzes the formation of N(4)-acetylcytidine (ac(4)C) at the wobble position of tRNA(Met), by using acetyl-CoA as an acetyl donor and ATP (or GTP). The protein is tRNA(Met) cytidine acetyltransferase TmcA of Methanopyrus kandleri (strain AV19 / DSM 6324 / JCM 9639 / NBRC 100938).